A 328-amino-acid polypeptide reads, in one-letter code: Beta-ketoacyl-[acyl-carrier-protein] synthase III (328 aa).

Residues Cys-113 and His-252 contribute to the active site. Positions 253 to 257 (QANLR) are ACP-binding. Asn-282 is an active-site residue.

Belongs to the thiolase-like superfamily. FabH family. As to quaternary structure, homodimer.

It is found in the cytoplasm. It catalyses the reaction malonyl-[ACP] + acetyl-CoA + H(+) = 3-oxobutanoyl-[ACP] + CO2 + CoA. It participates in lipid metabolism; fatty acid biosynthesis. Its function is as follows. Catalyzes the condensation reaction of fatty acid synthesis by the addition to an acyl acceptor of two carbons from malonyl-ACP. Catalyzes the first condensation reaction which initiates fatty acid synthesis and may therefore play a role in governing the total rate of fatty acid production. Possesses both acetoacetyl-ACP synthase and acetyl transacylase activities. Its substrate specificity determines the biosynthesis of branched-chain and/or straight-chain of fatty acids. This is Beta-ketoacyl-[acyl-carrier-protein] synthase III from Campylobacter fetus subsp. fetus (strain 82-40).